We begin with the raw amino-acid sequence, 74 residues long: Ubiquitin-like protein FUBI (74 aa).

Belongs to the ubiquitin family.

Its function is as follows. Confers arsenite resistance. This is Ubiquitin-like protein FUBI (FAU) from Cricetulus griseus (Chinese hamster).